The following is a 220-amino-acid chain: Probable nicotinate-nucleotide adenylyltransferase (220 aa).

This sequence belongs to the NadD family.

The catalysed reaction is nicotinate beta-D-ribonucleotide + ATP + H(+) = deamido-NAD(+) + diphosphate. The protein operates within cofactor biosynthesis; NAD(+) biosynthesis; deamido-NAD(+) from nicotinate D-ribonucleotide: step 1/1. Its function is as follows. Catalyzes the reversible adenylation of nicotinate mononucleotide (NaMN) to nicotinic acid adenine dinucleotide (NaAD). The sequence is that of Probable nicotinate-nucleotide adenylyltransferase from Serratia proteamaculans (strain 568).